The following is a 461-amino-acid chain: GTPase Der (461 aa).

2 consecutive EngA-type G domains span residues 25-188 (PVVA…PNVA) and 198-371 (RRVA…ASWD). GTP-binding positions include 31-38 (GRPNVGKS), 78-82 (DTGGW), 140-143 (NKVD), 204-211 (GKPNVGKS), 251-255 (DTAGL), and 316-319 (NKWD). The KH-like domain maps to 372 to 454 (TRIATGPLNI…PIRINVRVRE (83 aa)).

It belongs to the TRAFAC class TrmE-Era-EngA-EngB-Septin-like GTPase superfamily. EngA (Der) GTPase family. In terms of assembly, associates with the 50S ribosomal subunit.

In terms of biological role, GTPase that plays an essential role in the late steps of ribosome biogenesis. This is GTPase Der from Mycobacterium leprae (strain TN).